The following is a 106-amino-acid chain: Urease subunit beta (106 aa).

It belongs to the urease beta subunit family. In terms of assembly, heterotrimer of UreA (gamma), UreB (beta) and UreC (alpha) subunits. Three heterotrimers associate to form the active enzyme. The apoenzyme interacts with an accessory complex composed of UreD, UreF and UreG, which is required for the assembly of the nickel containing metallocenter of UreC. The UreE protein may also play a direct role as a metallochaperone in nickel transfer to the urease apoprotein.

Its subcellular location is the cytoplasm. It carries out the reaction urea + 2 H2O + H(+) = hydrogencarbonate + 2 NH4(+). It functions in the pathway nitrogen metabolism; urea degradation; CO(2) and NH(3) from urea (urease route): step 1/1. The apoenzyme can be activated in vitro in the presence of nickel ions and carbon dioxide, which promotes carboxylation of 'Lys-217' of the UreC (alpha) subunit. In Klebsiella aerogenes (Enterobacter aerogenes), this protein is Urease subunit beta.